A 362-amino-acid polypeptide reads, in one-letter code: 3-dehydroquinate synthase (362 aa).

NAD(+) is bound by residues 71 to 76, 105 to 109, 129 to 130, Lys142, and Lys151; these read DGEQNK, GVIGD, and TT. Zn(2+) is bound by residues Glu184, His247, and His264.

The protein belongs to the sugar phosphate cyclases superfamily. Dehydroquinate synthase family. Co(2+) serves as cofactor. It depends on Zn(2+) as a cofactor. The cofactor is NAD(+).

Its subcellular location is the cytoplasm. It catalyses the reaction 7-phospho-2-dehydro-3-deoxy-D-arabino-heptonate = 3-dehydroquinate + phosphate. Its pathway is metabolic intermediate biosynthesis; chorismate biosynthesis; chorismate from D-erythrose 4-phosphate and phosphoenolpyruvate: step 2/7. Its function is as follows. Catalyzes the conversion of 3-deoxy-D-arabino-heptulosonate 7-phosphate (DAHP) to dehydroquinate (DHQ). The polypeptide is 3-dehydroquinate synthase (Blochmanniella pennsylvanica (strain BPEN)).